Here is a 132-residue protein sequence, read N- to C-terminus: Translation initiation factor 5A (132 aa).

A Hypusine modification is found at Lys-36.

Belongs to the eIF-5A family.

Its subcellular location is the cytoplasm. Its function is as follows. Functions by promoting the formation of the first peptide bond. This chain is Translation initiation factor 5A (eIF5A), found in Pyrobaculum neutrophilum (strain DSM 2338 / JCM 9278 / NBRC 100436 / V24Sta) (Thermoproteus neutrophilus).